A 354-amino-acid chain; its full sequence is Transcription termination factor 3, mitochondrial (354 aa).

The transit peptide at 1 to 89 (MFCSALRNIL…SFNLAAYVNN (89 aa)) directs the protein to the mitochondrion.

This sequence belongs to the mTERF family.

Its subcellular location is the mitochondrion. Binds promoter DNA and regulates initiation of transcription. Regulator of mitochondrial ribosome biogenesis and translation that is essential for development. Required for normal mitochondrial transcription and translation. Required for assembly of mitochondrial respiratory complexes and normal mitochondrial function. Maintains 16S rRNA levels and functions in mitochondrial ribosome assembly by regulating the biogenesis of the 39S ribosomal subunit. This chain is Transcription termination factor 3, mitochondrial, found in Drosophila melanogaster (Fruit fly).